Here is a 451-residue protein sequence, read N- to C-terminus: uncharacterized protein (451 aa).

Positions 1–451 (MSETENKTTT…KKEAAKNKSK (451 aa)) are disordered. Residues 9–22 (TTETPTTTDSTVTT) are compositionally biased toward low complexity. The span at 44–54 (VKNQLSNTRTR) shows a compositional bias: polar residues. Positions 73-99 (KLIDTKERKEKKEKKEKEPKEPKEPKE) are enriched in basic and acidic residues. The segment covering 114 to 147 (GDEEEDEEKEEDEEQKEEQSQEEDSEESEEEQNS) has biased composition (acidic residues). A compositionally biased stretch (basic residues) spans 152 to 162 (KKKKKQAKKVA). 3 stretches are compositionally biased toward basic and acidic residues: residues 163–192 (KKET…EKEA), 199–210 (STEKKEKEEKPK), and 217–230 (KKDQ…KDGD). Residues 232–244 (STTTTATATTTTD) show a composition bias toward low complexity. Basic and acidic residues-rich tracts occupy residues 284 to 303 (TEEK…ETKK) and 311 to 340 (AAAE…DDKP). Residues 341 to 355 (AATTTTTTAAAATTT) are compositionally biased toward low complexity. The span at 356–383 (EEPKEKITKPAADKKKAPANKKAEKDQS) shows a compositional bias: basic and acidic residues. A compositionally biased stretch (low complexity) spans 393-425 (TTTATTTTTNKDATAPTTTTNKDATAPTTTTTK). Positions 441–451 (PKKEAAKNKSK) are enriched in basic and acidic residues.

This is an uncharacterized protein from Dictyostelium discoideum (Social amoeba).